The chain runs to 37 residues: Large ribosomal subunit protein bL36c (37 aa).

This sequence belongs to the bacterial ribosomal protein bL36 family.

The protein localises to the plastid. It is found in the chloroplast. This is Large ribosomal subunit protein bL36c from Thalassiosira pseudonana (Marine diatom).